Reading from the N-terminus, the 340-residue chain is GTP 3',8-cyclase (340 aa).

A Radical SAM core domain is found at 8-230 (KLGRPIRDLR…EQHFEIDPVE (223 aa)). R17 provides a ligand contact to GTP. Residues C24 and C28 each coordinate [4Fe-4S] cluster. Residue Y30 coordinates S-adenosyl-L-methionine. Residue C31 participates in [4Fe-4S] cluster binding. A GTP-binding site is contributed by R71. G75 contributes to the S-adenosyl-L-methionine binding site. T102 is a binding site for GTP. S126 lines the S-adenosyl-L-methionine pocket. Position 163 (K163) interacts with GTP. Position 197 (M197) interacts with S-adenosyl-L-methionine. C261 and C264 together coordinate [4Fe-4S] cluster. A GTP-binding site is contributed by 266–268 (RAR). Position 278 (C278) interacts with [4Fe-4S] cluster.

Belongs to the radical SAM superfamily. MoaA family. Monomer and homodimer. It depends on [4Fe-4S] cluster as a cofactor.

The enzyme catalyses GTP + AH2 + S-adenosyl-L-methionine = (8S)-3',8-cyclo-7,8-dihydroguanosine 5'-triphosphate + 5'-deoxyadenosine + L-methionine + A + H(+). It functions in the pathway cofactor biosynthesis; molybdopterin biosynthesis. Functionally, catalyzes the cyclization of GTP to (8S)-3',8-cyclo-7,8-dihydroguanosine 5'-triphosphate. The polypeptide is GTP 3',8-cyclase (Staphylococcus aureus (strain bovine RF122 / ET3-1)).